A 66-amino-acid polypeptide reads, in one-letter code: Pancreatic polypeptide prohormone (66 aa).

Position 36 is a tyrosine amide (Tyr-36). Residues 60-66 constitute a propeptide that is removed on maturation; it reads ELSPMDV.

Belongs to the NPY family.

The protein resides in the secreted. Functionally, hormone secreted by pancreatic cells that acts as a regulator of pancreatic and gastrointestinal functions probably by signaling through the G protein-coupled receptor NPY4R2. The protein is Pancreatic polypeptide prohormone (PPY) of Felis catus (Cat).